We begin with the raw amino-acid sequence, 492 residues long: Putative methyl-accepting chemotaxis AlkN (492 aa).

Helical transmembrane passes span 9-29 (FFLI…GMRL) and 159-179 (YVYF…FLLM). An HAMP domain is found at 180-231 (KKTRSSIDEIVHVMNDMSRGDLTYRTIPSNDEVGKMQSSIIAMGAGVSALIE). Residues 236–472 (IQGDLFNSAG…DMLDNANIIR (237 aa)) enclose the Methyl-accepting transducer domain.

This sequence belongs to the methyl-accepting chemotaxis (MCP) protein family.

The protein resides in the membrane. The protein operates within hydrocarbon metabolism; alkane degradation. Its function is as follows. Chemotactic-signal transducers respond to changes in the concentration of attractants and repellents in the environment, transduce a signal from the outside to the inside of the cell, and facilitate sensory adaptation through the variation of the level of methylation. The chain is Putative methyl-accepting chemotaxis AlkN (alkN) from Ectopseudomonas oleovorans (Pseudomonas oleovorans).